We begin with the raw amino-acid sequence, 566 residues long: ALBINO3-like protein 3, mitochondrial (566 aa).

The transit peptide at methionine 1–phenylalanine 44 directs the protein to the mitochondrion. 4 helical membrane-spanning segments follow: residues tryptophan 139 to leucine 159, leucine 207 to isoleucine 227, leucine 249 to histidine 269, and leucine 301 to tryptophan 321. 4 TPR repeats span residues proline 386–tyrosine 419, leucine 420–threonine 453, isoleucine 465–aspartate 498, and leucine 507–phenylalanine 540. A disordered region spans residues cysteine 547–serine 566. Residues threonine 555–serine 566 show a composition bias toward low complexity.

It belongs to the OXA1/ALB3/YidC (TC 2.A.9.2) family.

The protein localises to the mitochondrion inner membrane. Probably required for the insertion of integral membrane proteins into the mitochondrial inner membrane. The polypeptide is ALBINO3-like protein 3, mitochondrial (ALB3L3) (Arabidopsis thaliana (Mouse-ear cress)).